A 559-amino-acid polypeptide reads, in one-letter code: Cocaine esterase (559 aa).

Positions 1–26 (MRLHRLRARLSAVACGLLLLLVRGQG) are cleaved as a signal peptide. The residue at position 27 (glutamine 27) is a Pyrrolidone carboxylic acid. Residues cysteine 95 and cysteine 123 are joined by a disulfide bond. Asparagine 111 is a glycosylation site (N-linked (GlcNAc...) asparagine). The active-site Acyl-ester intermediate is serine 228. Asparagine 276 is a glycosylation site (N-linked (GlcNAc...) asparagine). Cysteine 280 and cysteine 291 form a disulfide bridge. Catalysis depends on charge relay system residues glutamate 345 and histidine 457. The Prevents secretion from ER motif lies at 556-559 (HTEL).

Belongs to the type-B carboxylesterase/lipase family. As to quaternary structure, monomer. In terms of processing, glycosylated. In terms of tissue distribution, preferentially expressed in intestine with moderate expression in liver. Within the intestine, highest expression is found in small intestine with lower expression in colon and rectum.

The protein resides in the endoplasmic reticulum lumen. It catalyses the reaction cocaine + H2O = ecgonine methyl ester + benzoate + H(+). The enzyme catalyses a carboxylic ester + H2O = an alcohol + a carboxylate + H(+). The catalysed reaction is 4-methylumbelliferyl acetate + H2O = 4-methylumbelliferone + acetate + H(+). It carries out the reaction 2-(5Z,8Z,11Z,14Z-eicosatetraenoyl)-glycerol + H2O = glycerol + (5Z,8Z,11Z,14Z)-eicosatetraenoate + H(+). It catalyses the reaction prostaglandin E2 1-glyceryl ester + H2O = prostaglandin E2 + glycerol + H(+). The enzyme catalyses prostaglandin F2alpha 1-glyceryl ester + H2O = prostaglandin F2alpha + glycerol + H(+). Its function is as follows. Involved in the detoxification of xenobiotics and in the activation of ester and amide prodrugs. Shows high catalytic efficiency for hydrolysis of cocaine, 4-methylumbelliferyl acetate, heroin and 6-monoacetylmorphine. Hydrolyzes aspirin, substrates with large alcohol group and small acyl group and endogenous lipids such as triacylglycerol. Converts monoacylglycerides to free fatty acids and glycerol. Hydrolyzes of 2-arachidonoylglycerol and prostaglandins. This is Cocaine esterase from Homo sapiens (Human).